Here is a 410-residue protein sequence, read N- to C-terminus: Phosphoglycerate kinase (410 aa).

Substrate is bound by residues 22 to 24 (DIN), R39, 62 to 65 (HQSR), R119, and R159. Residues E332 and 358-361 (GGHL) each bind ATP.

The protein belongs to the phosphoglycerate kinase family. Homodimer.

Its subcellular location is the cytoplasm. The enzyme catalyses (2R)-3-phosphoglycerate + ATP = (2R)-3-phospho-glyceroyl phosphate + ADP. Its pathway is carbohydrate degradation; glycolysis; pyruvate from D-glyceraldehyde 3-phosphate: step 2/5. This chain is Phosphoglycerate kinase (pgk), found in Methanothermus fervidus (strain ATCC 43054 / DSM 2088 / JCM 10308 / V24 S).